A 490-amino-acid polypeptide reads, in one-letter code: Adenylosuccinate synthetase 1, chloroplastic (490 aa).

Residues 1-47 (MSLSTLSHPAAAAAAATGSGKSHFRTAPAAQSVRFPKARPPVPAAVS) constitute a chloroplast transit peptide. The interval 14–36 (AAATGSGKSHFRTAPAAQSVRFP) is disordered. GTP contacts are provided by residues 77–83 (GDEGKGK) and 105–107 (GHT). D78 (proton acceptor) is an active-site residue. Positions 78 and 105 each coordinate Mg(2+). IMP-binding positions include 78–81 (DEGK), 103–106 (NAGH), T195, R209, Q289, T304, and R368. H106 (proton donor) is an active-site residue. Residue 364–370 (TTTGRPR) participates in substrate binding. Residues R370, 396-398 (KLD), and 479-481 (GVG) each bind GTP.

Belongs to the adenylosuccinate synthetase family. Homodimer. The cofactor is Mg(2+).

The protein localises to the plastid. It is found in the chloroplast. The enzyme catalyses IMP + L-aspartate + GTP = N(6)-(1,2-dicarboxyethyl)-AMP + GDP + phosphate + 2 H(+). It functions in the pathway purine metabolism; AMP biosynthesis via de novo pathway; AMP from IMP: step 1/2. In terms of biological role, plays an important role in the de novo pathway and in the salvage pathway of purine nucleotide biosynthesis. Catalyzes the first committed step in the biosynthesis of AMP from IMP. This Sorghum bicolor (Sorghum) protein is Adenylosuccinate synthetase 1, chloroplastic.